Consider the following 907-residue polypeptide: Clathrin coat assembly protein AP180 (907 aa).

The ENTH domain maps to 14–145 (QYSVTGSAVA…FSYRQMAFDF (132 aa)). Disordered stretches follow at residues 285 to 326 (LEGK…DTSP), 342 to 380 (TSKP…TAWG), 393 to 414 (SVPS…PTTT), and 505 to 525 (VPVV…APSP). A phosphoserine mark is found at Ser-296, Ser-300, and Ser-306. A compositionally biased stretch (polar residues) spans 302 to 324 (LSKSSPATTVTSPNSTPAKTIDT). Thr-310 carries O-linked (GlcNAc) threonine glycosylation. Position 313 is a phosphoserine (Ser-313). Phosphothreonine is present on Thr-317. Over residues 505-515 (VPVVTPTASTA) the composition is skewed to low complexity. Residues 516–525 (PPVPATAPSP) are compositionally biased toward pro residues. Ser-596, Ser-602, Ser-623, Ser-629, and Ser-763 each carry phosphoserine. Arg-865 carries the post-translational modification Asymmetric dimethylarginine; alternate. Residue Arg-865 is modified to Omega-N-methylarginine; alternate. A disordered region spans residues 867–907 (PFGAAAVPGTQLSPSPTPASQSPKKPPAKDPLADLNIKDFL). The segment covering 893–907 (PAKDPLADLNIKDFL) has biased composition (basic and acidic residues).

It belongs to the PICALM/SNAP91 family. In terms of assembly, binds AP2A2. Interacts with AP2B1; clathrin competes with SNAP91. Thr-310 can be modified by the addition of N-acetylglucosamine which can be further phosphorylated. There is no evidence for direct Thr-310 phosphorylation.

The protein resides in the cell membrane. It localises to the membrane. The protein localises to the coated pit. Adaptins are components of the adapter complexes which link clathrin to receptors in coated vesicles. Clathrin-associated protein complexes are believed to interact with the cytoplasmic tails of membrane proteins, leading to their selection and concentration. Binding of AP180 to clathrin triskelia induces their assembly into 60-70 nm coats. This chain is Clathrin coat assembly protein AP180 (SNAP91), found in Homo sapiens (Human).